The primary structure comprises 288 residues: Phosphatidylserine decarboxylase proenzyme (288 aa).

Active-site charge relay system; for autoendoproteolytic cleavage activity residues include D90, H147, and S254. The Schiff-base intermediate with substrate; via pyruvic acid; for decarboxylase activity role is filled by S254. S254 carries the post-translational modification Pyruvic acid (Ser); by autocatalysis.

This sequence belongs to the phosphatidylserine decarboxylase family. PSD-B subfamily. Prokaryotic type I sub-subfamily. As to quaternary structure, heterodimer of a large membrane-associated beta subunit and a small pyruvoyl-containing alpha subunit. Pyruvate is required as a cofactor. In terms of processing, is synthesized initially as an inactive proenzyme. Formation of the active enzyme involves a self-maturation process in which the active site pyruvoyl group is generated from an internal serine residue via an autocatalytic post-translational modification. Two non-identical subunits are generated from the proenzyme in this reaction, and the pyruvate is formed at the N-terminus of the alpha chain, which is derived from the carboxyl end of the proenzyme. The autoendoproteolytic cleavage occurs by a canonical serine protease mechanism, in which the side chain hydroxyl group of the serine supplies its oxygen atom to form the C-terminus of the beta chain, while the remainder of the serine residue undergoes an oxidative deamination to produce ammonia and the pyruvoyl prosthetic group on the alpha chain. During this reaction, the Ser that is part of the protease active site of the proenzyme becomes the pyruvoyl prosthetic group, which constitutes an essential element of the active site of the mature decarboxylase.

It localises to the cell membrane. The catalysed reaction is a 1,2-diacyl-sn-glycero-3-phospho-L-serine + H(+) = a 1,2-diacyl-sn-glycero-3-phosphoethanolamine + CO2. Its pathway is phospholipid metabolism; phosphatidylethanolamine biosynthesis; phosphatidylethanolamine from CDP-diacylglycerol: step 2/2. Catalyzes the formation of phosphatidylethanolamine (PtdEtn) from phosphatidylserine (PtdSer). This Hamiltonella defensa subsp. Acyrthosiphon pisum (strain 5AT) protein is Phosphatidylserine decarboxylase proenzyme.